Consider the following 201-residue polypeptide: Large ribosomal subunit protein bL12m (201 aa).

The transit peptide at 1–38 (MLPVAASRCLWGPRLGLRGAALRLARQQMPSVCAARQL) directs the protein to the mitochondrion. Disordered stretches follow at residues 37 to 60 (QLRSSSHRRSEALAGAPLDNAPKE) and 109 to 130 (VSAAAPASEAAEEEDVPKQKER). N6-acetyllysine occurs at positions 128, 141, 145, and 147. Lys-153 is modified (N6-acetyllysine; alternate). Lys-153 carries the post-translational modification N6-succinyllysine; alternate. Residue Lys-153 forms a Glycyl lysine isopeptide (Lys-Gly) (interchain with G-Cter in ubiquitin) linkage. Lys-165 is subject to N6-succinyllysine. N6-acetyllysine occurs at positions 166 and 176. Position 181 is an N6-acetyllysine; alternate (Lys-181). Lys-181 bears the N6-succinyllysine; alternate mark. Position 188 is an N6-acetyllysine (Lys-188).

This sequence belongs to the bacterial ribosomal protein bL12 family. As to quaternary structure, component of the mitochondrial ribosome large subunit (39S) which comprises a 16S rRNA and about 50 distinct proteins. Interacts with NOA1. Two mature forms are produced by differential two-step proteolytic cleavage. Cleaved by the mitochondrial processing protease to produce the long mature form and subsequently by the mitochondrial intermediate protease to produce the short mature form. In terms of processing, in the presence of CUL3, undergoes 'Lys-63'-linked ubiquitination at Lys-153 which results in proteasomal degradation.

Its subcellular location is the mitochondrion matrix. As a component of the mitochondrial large ribosomal subunit, plays a role in mitochondrial translation. When present in mitochondria as a free protein not associated with the ribosome, associates with mitochondrial RNA polymerase POLRMT to activate transcription. Required for POLRMT stability. This is Large ribosomal subunit protein bL12m (Mrpl12) from Mus musculus (Mouse).